Consider the following 337-residue polypeptide: Glucokinase (337 aa).

11–16 is an ATP binding site; the sequence is ADIGGT.

Belongs to the bacterial glucokinase family.

The protein resides in the cytoplasm. It carries out the reaction D-glucose + ATP = D-glucose 6-phosphate + ADP + H(+). This Xylella fastidiosa (strain M23) protein is Glucokinase.